The following is a 242-amino-acid chain: Cysteine-rich venom protein VAR11 (242 aa).

The first 19 residues, 1-19, serve as a signal peptide directing secretion; sequence MILLKLYLTLAAILCQSRG. The 129-residue stretch at 41–169 folds into the SCP domain; it reads NKHNDLRRTV…SLKYFQVCQY (129 aa). Intrachain disulfides connect C77–C156, C95–C170, C151–C167, C189–C196, C192–C201, C205–C237, C214–C231, and C223–C235. The ShKT domain maps to 205–237; the sequence is CAYNDDYTSCPDLTKQVGCNHPVTANCKASCQC.

It belongs to the CRISP family. In terms of tissue distribution, expressed by the venom gland.

Its subcellular location is the secreted. Its function is as follows. Blocks ryanodine receptors, and potassium channels. The protein is Cysteine-rich venom protein VAR11 of Varanus varius (Lace monitor lizard).